We begin with the raw amino-acid sequence, 750 residues long: 3-isopropylmalate dehydratase (750 aa).

Cys-353, Cys-413, and Cys-416 together coordinate [4Fe-4S] cluster. The disordered stretch occupies residues 492–524 (KYDGSPEVFKSTQDTTPAVKPPQPASDSSSSGG).

This sequence belongs to the aconitase/IPM isomerase family. Monomer. [4Fe-4S] cluster serves as cofactor.

It catalyses the reaction (2R,3S)-3-isopropylmalate = (2S)-2-isopropylmalate. It participates in amino-acid biosynthesis; L-leucine biosynthesis; L-leucine from 3-methyl-2-oxobutanoate: step 2/4. Functionally, catalyzes the isomerization between 2-isopropylmalate and 3-isopropylmalate, via the formation of 2-isopropylmaleate. This Rhizopus niveus protein is 3-isopropylmalate dehydratase (LEU1).